A 284-amino-acid polypeptide reads, in one-letter code: MDAIKKKMLAMKMEKENAVDRAEQNEQKLRDTEEQKAKIEEDLNNLQKKCANLENDFDSVNEQVQVAMAKLETSEKRVTEMEQEVSGTTRKITLLEEDLERNEERLQTATERLEEASKLPDESERGARVLESRSLADDERIDQLEAQLKEAKYIAEDAERKYDEAARKLAITEVDLERAEARPKAAEAKILELEEELKVVGNNTKSLEISEQEASQREDSYEETIRDLTQRLKDAENRATEAERTVSKLQKEVDRLEDELLAEKEKYKAISDELDQTFAELAGY.

Positions M1–Y284 form a coiled coil. Residues N202–E213 are compositionally biased toward polar residues. The segment at N202–E223 is disordered. Residues A214–E223 show a composition bias toward basic and acidic residues.

The protein belongs to the tropomyosin family. Homodimer.

Functionally, tropomyosin, in association with the troponin complex, plays a central role in the calcium dependent regulation of muscle contraction. The polypeptide is Tropomyosin (Haliotis rufescens (California red abalone)).